The sequence spans 923 residues: Ubiquitin carboxyl-terminal hydrolase 10 (923 aa).

Residues 19-134 (FTPEEEKRIV…GGPPIERKLI (116 aa)) form the DUSP domain. The tract at residues 65-91 (NECSTGESSEAPRPGPIDNHDIIESDS) is disordered. The USP domain maps to 304–895 (AGLSNLGNTC…AAYVLFYRRV (592 aa)). Cysteine 313 acts as the Nucleophile in catalysis. Histidine 853 functions as the Proton acceptor in the catalytic mechanism.

The protein belongs to the peptidase C19 family.

The catalysed reaction is Thiol-dependent hydrolysis of ester, thioester, amide, peptide and isopeptide bonds formed by the C-terminal Gly of ubiquitin (a 76-residue protein attached to proteins as an intracellular targeting signal).. Recognizes and hydrolyzes the peptide bond at the C-terminal Gly of ubiquitin. Involved in the processing of poly-ubiquitin precursors as well as that of ubiquitinated proteins. The sequence is that of Ubiquitin carboxyl-terminal hydrolase 10 (UBP10) from Arabidopsis thaliana (Mouse-ear cress).